Consider the following 288-residue polypeptide: ATP synthase gamma chain (288 aa).

It belongs to the ATPase gamma chain family. F-type ATPases have 2 components, CF(1) - the catalytic core - and CF(0) - the membrane proton channel. CF(1) has five subunits: alpha(3), beta(3), gamma(1), delta(1), epsilon(1). CF(0) has three main subunits: a, b and c.

The protein resides in the cell inner membrane. Produces ATP from ADP in the presence of a proton gradient across the membrane. The gamma chain is believed to be important in regulating ATPase activity and the flow of protons through the CF(0) complex. The polypeptide is ATP synthase gamma chain (Rickettsia bellii (strain RML369-C)).